Reading from the N-terminus, the 1248-residue chain is Ankyrin repeat and sterile alpha motif domain-containing protein 1B (1248 aa).

ANK repeat units follow at residues 2–31 (GKDQ…GGIL), 58–87 (SGYT…STNV), 91–120 (KGYF…SHSR), 127–156 (ENET…DPTI), 160–189 (KLET…NLMS), 193–222 (RKHT…DVSC), and 225–254 (EKGS…DANI). The interval 296–322 (EPVQEDATQETHISSPVESPSQKTKSE) is disordered. Residues 305 to 322 (ETHISSPVESPSQKTKSE) show a composition bias toward polar residues. Ser309, Ser310, Ser314, Ser353, and Ser364 each carry phosphoserine. Disordered regions lie at residues 367–400 (ELGK…NTCG), 474–514 (APSP…PDTA), and 558–623 (SFTA…ENPF). Positions 371–384 (NGSQSVRTSSTINL) are enriched in polar residues. The segment covering 388–397 (EVEEEDDDEN) has biased composition (acidic residues). The residue at position 503 (Thr503) is a Phosphothreonine. Residues Ser507 and Ser510 each carry the phosphoserine modification. Residues 558–575 (SFTASPPASPPTSSVGTT) show a composition bias toward low complexity. Residues 577-601 (VKNEGTNHTDDLSRQDDNDPPKEYD) show a composition bias toward basic and acidic residues. Phosphoserine is present on Ser738. Positions 749–777 (EKTSRVNWSESSTAEHSSKGNSERTPSFT) are disordered. Residues 753–763 (RVNWSESSTAE) show a composition bias toward polar residues. The residue at position 773 (Thr773) is a Phosphothreonine. Phosphoserine is present on Ser775. 2 SAM domains span residues 810 to 876 (CPVQ…LPKM) and 884 to 949 (YHPT…RLHD). A Phosphotyrosine modification is found at Tyr901. The short motif at 935–938 (HRKR) is the Nuclear localization signal element. The interval 944–989 (GDRLHDDPPQKPPRSITLREPSGNHTPPQLSPSLSQSTYTTGGSLD) is disordered. The segment covering 969 to 984 (TPPQLSPSLSQSTYTT) has biased composition (low complexity). Ser974 is modified (phosphoserine). Tyr1007 bears the Phosphotyrosine mark. One can recognise a PID domain in the interval 1056 to 1213 (IFQSCDYKAF…SFENKPSKPI (158 aa)). Residues 1197 to 1248 (HSSTLPESFENKPSKPIPKPRVSIRKSVDLLHASHTGQEPSERHTEEALRKF) are disordered. Residues 1236–1248 (PSERHTEEALRKF) show a composition bias toward basic and acidic residues.

As to quaternary structure, isoform 3 interacts with DLG4. Interacts with EPHA8. Isoform 2 interacts with COIL. Isoform 4 interacts with APP and EPHA8. Isoform 6 interacts with EPHA8. Post-translationally, isoform 3 nuclear translocation requires an NMDAR-dependent proteolytic cleavage. In terms of tissue distribution, highly expressed in marrow from patients with pre-B ALL associated with the t(1;19) translocation. Strongly expressed in brain and testis. Expressed in fetal brain. Isoform 4 is highly expressed in brain (at protein level). Isoform 6 is expressed in brain and several cancer cell lines.

The protein localises to the cytoplasm. It localises to the nucleus. The protein resides in the postsynaptic density. It is found in the cell projection. Its subcellular location is the dendritic spine. The protein localises to the cajal body. In terms of biological role, isoform 2 may participate in the regulation of nucleoplasmic coilin protein interactions in neuronal and transformed cells. Its function is as follows. Isoform 3 can regulate global protein synthesis by altering nucleolar numbers. Isoform 4 may play a role as a modulator of APP processing. Overexpression can down-regulate APP processing. This chain is Ankyrin repeat and sterile alpha motif domain-containing protein 1B (ANKS1B), found in Homo sapiens (Human).